A 433-amino-acid chain; its full sequence is 23S rRNA (uracil(1939)-C(5))-methyltransferase RlmD (433 aa).

One can recognise a TRAM domain in the interval M1–R53. Residues C66, C72, C75, and C154 each coordinate [4Fe-4S] cluster. Residues Q263, F292, N297, E313, N341, and D362 each contribute to the S-adenosyl-L-methionine site. C389 acts as the Nucleophile in catalysis.

This sequence belongs to the class I-like SAM-binding methyltransferase superfamily. RNA M5U methyltransferase family. RlmD subfamily.

It catalyses the reaction uridine(1939) in 23S rRNA + S-adenosyl-L-methionine = 5-methyluridine(1939) in 23S rRNA + S-adenosyl-L-homocysteine + H(+). In terms of biological role, catalyzes the formation of 5-methyl-uridine at position 1939 (m5U1939) in 23S rRNA. In Aromatoleum aromaticum (strain DSM 19018 / LMG 30748 / EbN1) (Azoarcus sp. (strain EbN1)), this protein is 23S rRNA (uracil(1939)-C(5))-methyltransferase RlmD.